The sequence spans 535 residues: Dynein axonemal assembly factor 8 (535 aa).

Disordered stretches follow at residues 112–215, 228–267, 344–380, 395–444, and 461–535; these read AELA…QERR, RDAC…EGPP, PADT…QGMR, TVPP…LRSC, and IAQP…LDQL. A compositionally biased stretch (basic and acidic residues) spans 125-139; that stretch reads RTKDASSQEGRDPGR. Polar residues predominate over residues 166-175; it reads GSLSFNTKGS. S175 bears the Phosphoserine mark. A Phosphoserine modification is found at S362. A compositionally biased stretch (acidic residues) spans 415-424; sequence DSEEEEEEVE. Positions 435-444 are enriched in polar residues; it reads SPSSLGLRSC.

The protein localises to the dynein axonemal particle. Its subcellular location is the cytoplasm. Functionally, in cyliated cells, dynein axonemal particle-specific protein required for deployment of ODA to the axoneme. Interacts with outer dynein arm (ODA) subunits. In Macaca fascicularis (Crab-eating macaque), this protein is Dynein axonemal assembly factor 8 (DNAAF8).